The following is a 334-amino-acid chain: Putative B3 domain-containing protein At5g66980 (334 aa).

2 DNA-binding regions (TF-B3) span residues 8-105 (LQFF…FAND) and 218-317 (HPHF…VSGR).

Its subcellular location is the nucleus. The sequence is that of Putative B3 domain-containing protein At5g66980 from Arabidopsis thaliana (Mouse-ear cress).